Consider the following 380-residue polypeptide: Ribosomal RNA large subunit methyltransferase G (380 aa).

Belongs to the methyltransferase superfamily. RlmG family.

It localises to the cytoplasm. The enzyme catalyses guanosine(1835) in 23S rRNA + S-adenosyl-L-methionine = N(2)-methylguanosine(1835) in 23S rRNA + S-adenosyl-L-homocysteine + H(+). Specifically methylates the guanine in position 1835 (m2G1835) of 23S rRNA. The polypeptide is Ribosomal RNA large subunit methyltransferase G (Streptomyces avermitilis (strain ATCC 31267 / DSM 46492 / JCM 5070 / NBRC 14893 / NCIMB 12804 / NRRL 8165 / MA-4680)).